A 3507-amino-acid polypeptide reads, in one-letter code: Dynein axonemal heavy chain 14 (3507 aa).

Residues Pro91–Gly126 form a disordered region. Residues Asp354–Glu381 adopt a coiled-coil conformation. The GPAGTGKT motif signature appears at Gly1164 to Thr1171. Residues Gly1164 to Thr1171 and Gly1427 to Thr1434 each bind ATP. N-linked (GlcNAc...) asparagine glycosylation is present at Asn1818.

Belongs to the dynein heavy chain family. Consists of at least two heavy chains and a number of intermediate and light chains.

The protein resides in the cytoplasm. The protein localises to the cytoskeleton. Its subcellular location is the cilium axoneme. Its function is as follows. Force generating protein of respiratory cilia. Produces force towards the minus ends of microtubules. Dynein has ATPase activity; the force-producing power stroke is thought to occur on release of ADP. Involved in sperm motility; implicated in sperm flagellar assembly. The sequence is that of Dynein axonemal heavy chain 14 (DNAH14) from Homo sapiens (Human).